We begin with the raw amino-acid sequence, 1152 residues long: MPSAGERPAVKMGPAPAGEQHRRATEDPEVMELAFEGMDKEKAPSRKRARTEPPAEGLLQPVNLSREELYKEPTNEELNRLRETEILFHSTLLRLQVEELLKEVRLSEKKKERIDNFLKEVTKRIQKVPPVPEAELTDQSWLPAGVRVPLHQVPYAVKGSFRFRPPSQITVVGSYLLDTCMRPDINVDVAVTMPREILQDKDGLNQRYFRKRALYLAHLAYHLAQDPLFSSVRFSYMSGCHLKPSLLLRPHGKDERLVTVRLLPCPPLDFFRPCRLLPTKNNVRSAWYRGQSCPDYEPPTPHYNTWILQDVALETHMHLLASVLGSAQGLKDGVALLKVWLRQRELDKGLGGFNGFIISMLVAFLVSKRKIHTTMSGYQVLRSVLQFLATTDLTINGISFSLSSDPSLPTLAEFHQLFAVVFVDPSGRLNLCADVTASTYNQVQYEAELSMALLDSKADDGFQLLLMTPKPMIQAFDHVVHLHPLSRLQASCHQLKLWPELQDNGGDYVSAALGPLTNILVQGLGCRLHLLAHSRPPVPEWSINQDPPKHKDAGTLTLGFLFRPEGLTSVIDLGPEADKPEAADFRQFWGTRSELRRFQDGAIREAVVWEAESLFEKRLIPHQVVTHLLALHADIPDTCIQYVGGFLDALIQNPKEISSTGEEALALAVRCYDDLSRLLWGLEGLPLTVSAVQGAHPVLRYTEVFPPAPVRPAYSFYNRLQELASLLPRPDKPCPAYVEPMTVVCHLEGSGQWPQDAEAVQRVRAAFQLRLAEVLTQEHRLQCCATATHTDVLKDGFVFRIRVAYQREPQILKEVRSPEGMVSLRDTPASLRLERDTKLLPLLTSALHGLQQQYPAYSGVARLAKRWVRAQLLGEGFTDESLDLLAASLFLHPEPFTPPSVPQVGFLRFLYLVSTFDWKNNPLIVNLNGELTAEEQVGIRSSFLAARTQLPVMVIITPQDRRSSVWTQDGPSAQILQQLVSLAAEALPILEKQLMDPRGPGDIRTVFRPPFDMYDVLIHLTPRHIPRHRQAVDPPVASFCRGLLAEPGPSSLMPVLGYDPPQLYLAQLREAFEDLALFFYDQHGGEVIGVLWKPSSFQPQPFKASSIKGRMVVSQGGELVMLPNIEAILEDFAVLGEGLVQAVEARSERWTV.

2 disordered regions span residues 1 to 30 and 36 to 55; these read MPSA…DPEV and EGMD…EPPA. At Ser-65 the chain carries Phosphoserine. A coiled-coil region spans residues 92-128; it reads LLRLQVEELLKEVRLSEKKKERIDNFLKEVTKRIQKV. 2 positions are modified to phosphoserine: Ser-292 and Ser-817.

It belongs to the NRAP family. As to quaternary structure, part of the small subunit (SSU) processome, composed of more than 70 proteins and the RNA chaperone small nucleolar RNA (snoRNA) U3. Interacts with RRP7A; required for NOL6 localization to nucleolus. In terms of tissue distribution, ubiquitously expressed.

It localises to the nucleus. Its subcellular location is the nucleolus. The protein resides in the chromosome. Part of the small subunit (SSU) processome, first precursor of the small eukaryotic ribosomal subunit. During the assembly of the SSU processome in the nucleolus, many ribosome biogenesis factors, an RNA chaperone and ribosomal proteins associate with the nascent pre-rRNA and work in concert to generate RNA folding, modifications, rearrangements and cleavage as well as targeted degradation of pre-ribosomal RNA by the RNA exosome. This chain is Nucleolar protein 6 (Nol6), found in Mus musculus (Mouse).